Here is a 299-residue protein sequence, read N- to C-terminus: MRLVFMGTPAFSVPVLDALVAAGHEVAAVYCQPPRPAGRGKKPRPSPVQARAEVLGLAVRHPVSLKGAEAQADFAALGAEIAVVVAYGLILPQAVLDAPEHGCWNIHASLLPRWRGAAPIHRAILAGDAETGVCIMQMEAGLDTGPVLLREAVAIGAEETTGGLHDRLSALGARLIVEALARRAELVPEPQPEVGVTYAAKIDKAEARVDWSRPAVEVDRLIRGLSPVPGAWCEIAGERVKLLGSRLAEGSGAAGQVLEGFTLACGVGAVEITRAQRAGRKAADAAEILRGMTLPARLD.

Residue serine 109–proline 112 coordinates (6S)-5,6,7,8-tetrahydrofolate.

Belongs to the Fmt family.

It catalyses the reaction L-methionyl-tRNA(fMet) + (6R)-10-formyltetrahydrofolate = N-formyl-L-methionyl-tRNA(fMet) + (6S)-5,6,7,8-tetrahydrofolate + H(+). Attaches a formyl group to the free amino group of methionyl-tRNA(fMet). The formyl group appears to play a dual role in the initiator identity of N-formylmethionyl-tRNA by promoting its recognition by IF2 and preventing the misappropriation of this tRNA by the elongation apparatus. The sequence is that of Methionyl-tRNA formyltransferase from Dinoroseobacter shibae (strain DSM 16493 / NCIMB 14021 / DFL 12).